Here is a 287-residue protein sequence, read N- to C-terminus: uncharacterized protein (287 aa).

Positions 183–281 constitute an HTH araC/xylS-type domain; the sequence is WEAARYLQEH…GISPIEYRKI (99 aa). DNA-binding regions (H-T-H motif) lie at residues 200–221 and 248–271; these read KDLSLALHYHQDYVSRCMQQVL and MGVIAETVGMEDPTYFSKLFKQIE.

This is an uncharacterized protein from Bacillus subtilis (strain 168).